The following is a 374-amino-acid chain: Protein-glutamate methylesterase/protein-glutamine glutaminase (374 aa).

One can recognise a Response regulatory domain in the interval 4–121 (KVLVVDDSGF…SRNPDKVKQM (118 aa)). Asp55 carries the 4-aspartylphosphate modification. Residues 144–186 (PVAAPVPASSPAPASSFASPAPARPAATARAAAPAASHSPAPK) are disordered. Residues 154 to 183 (PAPASSFASPAPARPAATARAAAPAASHSP) show a composition bias toward low complexity. The CheB-type methylesterase domain occupies 183–374 (PAPKRKPYKL…IGKHLVEACV (192 aa)). Active-site residues include Ser198, His225, and Asp318.

This sequence belongs to the CheB family. In terms of processing, phosphorylated by CheA. Phosphorylation of the N-terminal regulatory domain activates the methylesterase activity.

It is found in the cytoplasm. It carries out the reaction [protein]-L-glutamate 5-O-methyl ester + H2O = L-glutamyl-[protein] + methanol + H(+). It catalyses the reaction L-glutaminyl-[protein] + H2O = L-glutamyl-[protein] + NH4(+). In terms of biological role, involved in chemotaxis. Part of a chemotaxis signal transduction system that modulates chemotaxis in response to various stimuli. Catalyzes the demethylation of specific methylglutamate residues introduced into the chemoreceptors (methyl-accepting chemotaxis proteins or MCP) by CheR. Also mediates the irreversible deamidation of specific glutamine residues to glutamic acid. The protein is Protein-glutamate methylesterase/protein-glutamine glutaminase of Pseudomonas putida (Arthrobacter siderocapsulatus).